Here is a 228-residue protein sequence, read N- to C-terminus: MDIERVEQVRAVERLAHRRGLALMPRAGLAAADFVAARLPAGAQVLALAGPGNNGGDALVAATLLQARGYRVAVVMPAGPARLPDDARRAWQDWCAAGGQASADLPAHAPALVIDGLFGIGLARPLDGAWQGLIDQVNAWRVPVLALDVPSGLSAASGQPLGDPPGRPVRATWTLSFIGVPAALRAPGAAAWCGEQYLSLLGLTPAFLAEAVGPCGQATATAARRSGP.

One can recognise a YjeF N-terminal domain in the interval 9–209 (VRAVERLAHR…LLGLTPAFLA (201 aa)). Residue 53–57 (NNGGD) coordinates (6S)-NADPHX. Residues Asn54 and Asp115 each contribute to the K(+) site. Residues 119–125 (GIGLARP) and Asp148 contribute to the (6S)-NADPHX site. Ser151 contributes to the K(+) binding site.

It belongs to the NnrE/AIBP family. The cofactor is K(+).

It carries out the reaction (6R)-NADHX = (6S)-NADHX. The enzyme catalyses (6R)-NADPHX = (6S)-NADPHX. Catalyzes the epimerization of the S- and R-forms of NAD(P)HX, a damaged form of NAD(P)H that is a result of enzymatic or heat-dependent hydration. This is a prerequisite for the S-specific NAD(P)H-hydrate dehydratase to allow the repair of both epimers of NAD(P)HX. This Bordetella pertussis (strain CS) protein is NAD(P)H-hydrate epimerase.